The chain runs to 65 residues: Movement protein TGBp3 (65 aa).

At 1 to 3 (MQA) the chain is on the lumenal side. Residues 4–24 (SGLILVALFSAVVSYLALLHL) form a helical membrane-spanning segment. Residues 25-65 (SSSSSSCVVVVTGESFRISGCDFTEEFIGFAKTLRVANSQP) are Cytoplasmic-facing.

The protein belongs to the Tymovirales TGBp3 protein family.

Its subcellular location is the host endoplasmic reticulum membrane. Its function is as follows. Plays a role in viral cell-to-cell propagation, by facilitating genome transport to neighboring plant cells through plasmosdesmata. May induce the formation of granular vesicles derived from the Endoplasmic reticulum, which align on actin filaments. This chain is Movement protein TGBp3, found in Carnation latent virus (CLV).